The sequence spans 455 residues: GTPase Der (455 aa).

2 consecutive EngA-type G domains span residues 4-169 (PVVA…PPKD) and 178-353 (IQMA…EQHR). Residues 10–17 (GRPNVGKS), 57–61 (DTGGL), 120–123 (NKCE), 184–191 (GRPNVGKS), 231–235 (DTAGI), and 296–299 (NKWD) contribute to the GTP site. The 86-residue stretch at 354–439 (RRVSTSVVNE…PVKLYWRGKQ (86 aa)) folds into the KH-like domain.

It belongs to the TRAFAC class TrmE-Era-EngA-EngB-Septin-like GTPase superfamily. EngA (Der) GTPase family. In terms of assembly, associates with the 50S ribosomal subunit.

Functionally, GTPase that plays an essential role in the late steps of ribosome biogenesis. The chain is GTPase Der from Parasynechococcus marenigrum (strain WH8102).